The sequence spans 382 residues: L-arabinitol 4-dehydrogenase (382 aa).

Zn(2+)-binding residues include Cys-55, His-80, Glu-81, Cys-110, Cys-113, Cys-116, Cys-124, and Glu-165. Residues 192–193 (PI), Asp-213, Arg-218, Ile-293, and 317–319 (QYR) contribute to the NAD(+) site.

The protein belongs to the zinc-containing alcohol dehydrogenase family. As to quaternary structure, homotetramer. Zn(2+) serves as cofactor.

The enzyme catalyses L-arabinitol + NAD(+) = L-xylulose + NADH + H(+). It participates in carbohydrate degradation; L-arabinose degradation via L-arabinitol; D-xylulose 5-phosphate from L-arabinose (fungal route): step 2/5. Its function is as follows. Catalyzes the NAD-dependent oxidation of L-arabinitol to L-xylulose in the fungal L-arabinose catabolic pathway. L-arabinose catabolism is important for using plant material as a carbon source. Also active on ribitol and xylitol. Not active with NADP as cosubstrate. This is L-arabinitol 4-dehydrogenase (ladA) from Aspergillus oryzae (Yellow koji mold).